The sequence spans 557 residues: Leucine-rich glioma-inactivated protein 1 (557 aa).

A signal peptide spans methionine 1–glycine 34. The region spanning lysine 35–leucine 72 is the LRRNT domain. LRR repeat units lie at residues serine 92–glycine 113, histidine 116–glycine 137, and serine 140–glycine 161. The 51-residue stretch at asparagine 173–isoleucine 223 folds into the LRRCT domain. N-linked (GlcNAc...) asparagine glycosylation is present at asparagine 192. 7 EAR repeats span residues glutamate 225 to histidine 267, threonine 271 to serine 313, lysine 317 to glycine 364, glycine 366 to lysine 415, leucine 419 to glycine 462, serine 464 to alanine 506, and lysine 510 to isoleucine 552. An N-linked (GlcNAc...) asparagine glycan is attached at asparagine 277. N-linked (GlcNAc...) asparagine glycosylation is present at asparagine 422.

In terms of assembly, oligomer. Interacts with KCNA1 within a complex containing KCNA1, KCNA4 and KCNAB1. Part of a complex containing ADAM22, DLG4/PSD95 and CACNG2/Stargazin. Can bind to ADAM11 and ADAM23. Glycosylated. As to expression, predominantly expressed in neural tissues, especially in brain. Expression is reduced in low-grade brain tumors and significantly reduced or absent in malignant gliomas. In terms of tissue distribution, expressed in the occipital cortex and hippocampus; higher amounts are observed in the parietal and frontal cortices, putamen, and, particularly, in the temporal neocortex, where it is between 3 and 5 times more abundant than in the hippocampus (at protein level). Expression is absent in the cerebellum. Abundantly expressed in the occipital cortex and weakly expressed in the hippocampus (at protein level).

It is found in the secreted. Its subcellular location is the synapse. The protein resides in the cytoplasm. The protein localises to the golgi apparatus. It localises to the endoplasmic reticulum. Functionally, regulates voltage-gated potassium channels assembled from KCNA1, KCNA4 and KCNAB1. It slows down channel inactivation by precluding channel closure mediated by the KCNAB1 subunit. Ligand for ADAM22 that positively regulates synaptic transmission mediated by AMPA-type glutamate receptors. Plays a role in suppressing the production of MMP1/3 through the phosphatidylinositol 3-kinase/ERK pathway. May play a role in the control of neuroblastoma cell survival. This Homo sapiens (Human) protein is Leucine-rich glioma-inactivated protein 1 (LGI1).